The following is a 450-amino-acid chain: Protein DA1-related 3 (450 aa).

A coiled-coil region spans residues 1–46 (MVRRKRQEEDEKIEIERVKEESLKLAKQAEEKRRLEESKEQGKRIQ). Composition is skewed to basic and acidic residues over residues 27-47 (KQAE…RIQV) and 56-69 (TSKD…SKDV). Residues 27 to 87 (KQAEEKRRLE…PSIDGKSEIG (61 aa)) are disordered.

The sequence is that of Protein DA1-related 3 (DAR3) from Arabidopsis thaliana (Mouse-ear cress).